The following is a 266-amino-acid chain: Translation initiation factor 2 subunit alpha (266 aa).

Residues 12-83 (GEILIATVKQ…RKGTVDVSLK (72 aa)) form the S1 motif domain.

This sequence belongs to the eIF-2-alpha family. Heterotrimer composed of an alpha, a beta and a gamma chain.

In terms of biological role, eIF-2 functions in the early steps of protein synthesis by forming a ternary complex with GTP and initiator tRNA. This Saccharolobus islandicus (strain Y.N.15.51 / Yellowstone #2) (Sulfolobus islandicus) protein is Translation initiation factor 2 subunit alpha.